The following is a 934-amino-acid chain: Complement component C6 (934 aa).

The signal sequence occupies residues M1 to A21. 11 disulfides stabilise this stretch: C22–C61, C24–C65, C35–C73, C39–C78, C82–C117, C93–C127, C96–C133, C140–C151, C146–C164, C158–C173, and C180–C218. 2 TSP type-1 domains span residues C22–P79 and N81–K134. A C-linked (Man) tryptophan glycan is attached at W29. W32 carries a C-linked (Man) tryptophan; partial glycan. O-linked (Fuc...) threonine glycosylation is present at T38. C-linked (Man) tryptophan; partial glycosylation occurs at W90. Residues A138–R175 enclose the LDL-receptor class A domain. Residues L156, N159, E161, D163, D169, and E170 each contribute to the Ca(2+) site. An MACPF domain is found at T176 to Q522. A beta stranded membrane pass occupies residues S278–S290. N-linked (GlcNAc...) asparagine glycosylation occurs at N324. O-linked (Fuc...) threonine glycosylation occurs at T392. 16 cysteine pairs are disulfide-bonded: C399–C420, C499–C623, C521–C570, C523–C539, C526–C541, C543–C552, C577–C611, C589–C601, C644–C686, C672–C699, C704–C746, C732–C761, C773–C823, C784–C801, C786–C837, and C793–C816. A beta stranded membrane pass occupies residues I402 to K415. Residues C523–E553 form the EGF-like domain. A TSP type-1 3 domain is found at D565–T612. W568, W571, and W574 each carry a C-linked (Man) tryptophan; partial glycan. CCP regions lie at residues C611–P688 and D689–T765. Sushi domains are found at residues S642–R701 and T702–K763. Residues S642–A934 form a C5b-binding domain region. The segment at L766 to G840 is factor I module (FIM) 1. One can recognise a Kazal-like 1 domain in the interval S780–D839. N855 carries an N-linked (GlcNAc...) asparagine glycan. The interval K858 to A934 is factor I module (FIM) 2. 5 disulfide bridges follow: C862-C873, C867-C919, C880-C897, C882-C932, and C888-C912. The 59-residue stretch at S876–A934 folds into the Kazal-like 2 domain.

Belongs to the complement C6/C7/C8/C9 family. Component of the membrane attack complex (MAC), composed of complement C5b, C6, C7, C8A, C8B, C8G and multiple copies of the pore-forming subunit C9. In terms of processing, all cysteine residues are assumed to be cross-linked to one another. Individual modules containing an even number of conserved cysteine residues are supposed to have disulfide linkages only within the same module.

It is found in the secreted. The protein resides in the target cell membrane. Membrane attack complex (MAC) assembly is inhibited by CD59, thereby protecting self-cells from damage during complement activation. MAC assembly is also inhibited by clusterin (CLU) chaperones that inhibit polymerization of C9. In terms of biological role, component of the membrane attack complex (MAC), a multiprotein complex activated by the complement cascade, which inserts into a target cell membrane and forms a pore, leading to target cell membrane rupture and cell lysis. The MAC is initiated by proteolytic cleavage of C5 into complement C5b in response to the classical, alternative, lectin and GZMK complement pathways. The complement pathways consist in a cascade of proteins that leads to phagocytosis and breakdown of pathogens and signaling that strengthens the adaptive immune system. Together with component C5b, involved in MAC complex assembly: complement C5b and C6 associate with the outer leaflet of target cell membrane, reducing the energy for membrane bending. The chain is Complement component C6 from Homo sapiens (Human).